Here is a 300-residue protein sequence, read N- to C-terminus: Glycine--tRNA ligase alpha subunit (300 aa).

The protein belongs to the class-II aminoacyl-tRNA synthetase family. Tetramer of two alpha and two beta subunits.

It localises to the cytoplasm. The enzyme catalyses tRNA(Gly) + glycine + ATP = glycyl-tRNA(Gly) + AMP + diphosphate. The sequence is that of Glycine--tRNA ligase alpha subunit (glyQ) from Buchnera aphidicola subsp. Baizongia pistaciae (strain Bp).